Here is a 125-residue protein sequence, read N- to C-terminus: MAQIPPSLQDLVNRFNQVQAQLQNVLLRKQQYEAELREIEKALTEIEKLPQDAKIYKSVGNFLIPQNRDAALQELRERKELLELHTKTLARQESLLREQIEKLREEINKELSRLKGSVETAKGGG.

This sequence belongs to the prefoldin subunit beta family. As to quaternary structure, heterohexamer of two alpha and four beta subunits.

Its subcellular location is the cytoplasm. Functionally, molecular chaperone capable of stabilizing a range of proteins. Seems to fulfill an ATP-independent, HSP70-like function in archaeal de novo protein folding. This is Prefoldin subunit beta from Pyrobaculum islandicum (strain DSM 4184 / JCM 9189 / GEO3).